A 104-amino-acid polypeptide reads, in one-letter code: Transcription elongation factor A protein-like 9 (104 aa).

Positions 1–27 are enriched in basic and acidic residues; the sequence is MKSCQKMEGKPENESEPKHEEEPKPEE. A disordered region spans residues 1–44; it reads MKSCQKMEGKPENESEPKHEEEPKPEEKPEEEEKLEEEAKAKGT.

Belongs to the TFS-II family. TFA subfamily.

The protein localises to the nucleus. Functionally, may be involved in transcriptional regulation. This Homo sapiens (Human) protein is Transcription elongation factor A protein-like 9.